The primary structure comprises 1470 residues: Niemann-Pick type C1-related protein (1470 aa).

Residues 1 to 3 (MFV) lie on the Cytoplasmic side of the membrane. Residues 4-34 (KNFIHKLKELKQKSLDKFANLLYDYGGYVYD) lie within the membrane without spanning it. Position 35 (Arg-35) is a topological domain, cytoplasmic. Residues 36–56 (PCTFIICSLICCLLLTCGFYF) form a helical membrane-spanning segment. The Extracellular portion of the chain corresponds to 57-493 (KEHEKDIYKL…DEVDRISKID (437 aa)). N-linked (GlcNAc...) asparagine glycosylation is found at Asn-78, Asn-165, Asn-294, and Asn-361. The chain crosses the membrane as a helical span at residues 494–514 (NLTRLLLLIGVLLIFMYALFN). Positions 494-653 (NLTRLLLLIG…LTFLLSFLCI (160 aa)) constitute an SSD domain. Over 515 to 524 (NVTSVLYRSK) the chain is Cytoplasmic. Residues 525 to 549 (PLCAVMGIFCGFLGFLSGSGFLYFL) form a helical membrane-spanning segment. At 550-554 (GVKSV) the chain is on the extracellular side. The helical transmembrane segment at 555–582 (PPAETVPFLVIGVGVDDVFVILNSYSLL) threads the bilayer. The Cytoplasmic segment spans residues 583–587 (FMVKD). A helical transmembrane segment spans residues 588-619 (NKKRIQMCLKDSALAITVTTLTNIIAFLISAI). Over 620 to 622 (SPF) the chain is Extracellular. Residues 623 to 659 (YSICAFSLFTASSLFFGYLMVLTFLLSFLCIEAKLEK) traverse the membrane as a helical segment. The Cytoplasmic segment spans residues 660 to 663 (KKRN). An intramembrane segment occupies 664-673 (IFTGTFHLFR). Over 674 to 1057 (SIFMKSSKKN…IYEEPKGNIG (384 aa)) the chain is Cytoplasmic. Residues 1058 to 1073 (KYFRSLVKNYYVPFLS) lie within the membrane without spanning it. Ser-1074 is a topological domain (cytoplasmic). A helical membrane pass occupies residues 1075-1098 (RFGKTIVYIMFTIIIAMSIYGCTL). At 1099–1300 (MKKGIKYDKA…NHNVQMVCFH (202 aa)) the chain is on the extracellular side. An N-linked (GlcNAc...) asparagine glycan is attached at Asn-1218. Residues 1301–1334 (LSSIFNETDESIIEVTLINLGITILTILVVTAYI) traverse the membrane as a helical segment. Over 1335–1337 (IKG) the chain is Cytoplasmic. A helical transmembrane segment spans residues 1338-1361 (FYSCVIIALIIFLIDLCIFGFMCL). Residues 1362-1367 (CGITMN) lie on the Extracellular side of the membrane. The helical transmembrane segment at 1368–1394 (IISMVILVLSVGFSIDHTSHIVQAFSH) threads the bilayer. Over 1395–1399 (SMGRT) the chain is Cytoplasmic. The helical transmembrane segment at 1400-1431 (RDEKMKESLHLMIGPVLHSGLSTWFVISTLFF) threads the bilayer. At 1432-1434 (SNK) the chain is on the extracellular side. Residues 1435–1466 (DFTVIFFQTLSLVLFFSITFSSMFLPVLLSSF) traverse the membrane as a helical segment. Over 1467 to 1470 (GPLH) the chain is Cytoplasmic.

The protein belongs to the patched family.

It localises to the cell membrane. The catalysed reaction is cholesterol(in) = cholesterol(out). Facilitates cholesterol efflux from membranes in a pH-dependent manner. Required for maintaining normal parasite plasma membrane lipid composition. Required for the proper functioning of digestive vacuole. Required for the viability of blood-stage parasites. The protein is Niemann-Pick type C1-related protein of Plasmodium falciparum (isolate 3D7).